A 152-amino-acid chain; its full sequence is Protein SprT-like (152 aa).

The SprT-like domain occupies 7–147 (QRLVEEVSLQ…CGKCKGKLKP (141 aa)). Histidine 67 lines the Zn(2+) pocket. Residue glutamate 68 is part of the active site. Position 71 (histidine 71) interacts with Zn(2+).

The protein belongs to the SprT family. The cofactor is Zn(2+).

Its subcellular location is the cytoplasm. The chain is Protein SprT-like from Bacillus cereus (strain ATCC 14579 / DSM 31 / CCUG 7414 / JCM 2152 / NBRC 15305 / NCIMB 9373 / NCTC 2599 / NRRL B-3711).